Reading from the N-terminus, the 299-residue chain is Oxygen-dependent coproporphyrinogen-III oxidase (299 aa).

A substrate-binding site is contributed by Ser92. Residues His96 and His106 each coordinate a divalent metal cation. His106 acts as the Proton donor in catalysis. 108 to 110 (NVR) is a substrate binding site. Residues His145 and His175 each contribute to the a divalent metal cation site. Positions 239–274 (YVEFNLVYDRGTLFGLQSGGRAESILMSLPPRVRWE) are important for dimerization. Residue 257–259 (GGR) participates in substrate binding.

This sequence belongs to the aerobic coproporphyrinogen-III oxidase family. As to quaternary structure, homodimer. It depends on a divalent metal cation as a cofactor.

The protein localises to the cytoplasm. The enzyme catalyses coproporphyrinogen III + O2 + 2 H(+) = protoporphyrinogen IX + 2 CO2 + 2 H2O. It functions in the pathway porphyrin-containing compound metabolism; protoporphyrin-IX biosynthesis; protoporphyrinogen-IX from coproporphyrinogen-III (O2 route): step 1/1. Functionally, involved in the heme biosynthesis. Catalyzes the aerobic oxidative decarboxylation of propionate groups of rings A and B of coproporphyrinogen-III to yield the vinyl groups in protoporphyrinogen-IX. The chain is Oxygen-dependent coproporphyrinogen-III oxidase from Xanthomonas axonopodis pv. citri (strain 306).